The primary structure comprises 596 residues: Probable lysosomal cobalamin transporter (596 aa).

A run of 10 helical transmembrane segments spans residues 13-33 (IWVAYAVAVALVLLVAIITTF), 45-65 (VSIVAIVSLTSLLATVFLLPV), 99-119 (VVYYTLYSFDALLCLIVIPFA), 150-170 (LGFVFLVLILFLLGFFVPAAG), 201-221 (LLITLGTFLYTLYTGAGLALL), 318-338 (LLGGILLLLLSILVWASMLIT), 353-373 (GYILGHINVFQPVNWIFVQSA), 381-401 (ILMALLVLFFFGSSITGIATI), 425-445 (IATVMLALIILAINYAIAMIV), and 512-532 (VFGAIDFWAQFAFLGVFMVVF). Asparagine 543 carries N-linked (GlcNAc...) asparagine glycosylation. Positions 576 to 596 (GRAKNRNGYGTGGGEGSNGRG) are disordered. Over residues 584–596 (YGTGGGEGSNGRG) the composition is skewed to gly residues.

It belongs to the LIMR family. LMBRD1 subfamily.

The protein resides in the lysosome membrane. Its function is as follows. Probable lysosomal cobalamin transporter. Required to export cobalamin from lysosomes allowing its conversion to cofactors. The chain is Probable lysosomal cobalamin transporter from Podospora anserina (strain S / ATCC MYA-4624 / DSM 980 / FGSC 10383) (Pleurage anserina).